A 509-amino-acid chain; its full sequence is Heat shock 70 kDa protein 14 (509 aa).

It belongs to the heat shock protein 70 family. Component of ribosome-associated complex (RAC), a heterodimer composed of Hsp70/DnaK-type chaperone HSPA14 and Hsp40/DnaJ-type chaperone DNAJC2.

Its subcellular location is the cytoplasm. It is found in the cytosol. Its function is as follows. Component of the ribosome-associated complex (RAC), a complex involved in folding or maintaining nascent polypeptides in a folding-competent state. In the RAC complex, binds to the nascent polypeptide chain, while DNAJC2 stimulates its ATPase activity. This chain is Heat shock 70 kDa protein 14 (HSPA14), found in Homo sapiens (Human).